We begin with the raw amino-acid sequence, 410 residues long: Succinyl-CoA:(R)-benzylsuccinate CoA-transferase subunit BbsE (410 aa).

Belongs to the CoA-transferase III family. Heterotetramer composed of 2 BbsE subunits and 2 BbsF subunits.

The enzyme catalyses (R)-2-benzylsuccinate + succinyl-CoA = (R)-2-benzylsuccinyl-CoA + succinate. Its pathway is xenobiotic degradation; toluene degradation. With respect to regulation, inhibited by (S)-benzylsuccinyl-CoA. Catalyzes the reversible conversion of (R)-2-benzylsuccinate to (R)-2-benzylsuccinyl-CoA. Inactive with (S)-benzylsuccinate. The protein is Succinyl-CoA:(R)-benzylsuccinate CoA-transferase subunit BbsE (bbsE) of Thauera aromatica.